The following is a 195-amino-acid chain: Interferon omega-1 (195 aa).

A signal peptide (or 23 in some molecules) is located at residues 1–21 (MALLFPLLAALVMTSYSPVGS). Intrachain disulfides connect C24–C122 and C52–C162. N-linked (GlcNAc...) asparagine glycosylation occurs at N101.

The protein belongs to the alpha/beta interferon family.

It is found in the secreted. The sequence is that of Interferon omega-1 (IFNW1) from Homo sapiens (Human).